Here is a 105-residue protein sequence, read N- to C-terminus: Iron-sulfur cluster assembly protein CyaY (105 aa).

Belongs to the frataxin family.

Involved in iron-sulfur (Fe-S) cluster assembly. May act as a regulator of Fe-S biogenesis. The sequence is that of Iron-sulfur cluster assembly protein CyaY from Chromobacterium violaceum (strain ATCC 12472 / DSM 30191 / JCM 1249 / CCUG 213 / NBRC 12614 / NCIMB 9131 / NCTC 9757 / MK).